A 261-amino-acid chain; its full sequence is Phosphate import ATP-binding protein PstB 4 (261 aa).

Positions 8-256 (IKVNNLSFYY…PHDSRTREYV (249 aa)) constitute an ABC transporter domain. 40-47 (GPSGCGKS) provides a ligand contact to ATP.

This sequence belongs to the ABC transporter superfamily. Phosphate importer (TC 3.A.1.7) family. In terms of assembly, the complex is composed of two ATP-binding proteins (PstB), two transmembrane proteins (PstC and PstA) and a solute-binding protein (PstS).

It localises to the cell inner membrane. The catalysed reaction is phosphate(out) + ATP + H2O = ADP + 2 phosphate(in) + H(+). In terms of biological role, part of the ABC transporter complex PstSACB involved in phosphate import. Responsible for energy coupling to the transport system. The protein is Phosphate import ATP-binding protein PstB 4 of Trichormus variabilis (strain ATCC 29413 / PCC 7937) (Anabaena variabilis).